Consider the following 143-residue polypeptide: Nucleoside diphosphate kinase (143 aa).

ATP is bound by residues Lys-11, Phe-59, Arg-87, Thr-93, Arg-104, and Asn-114. His-117 (pros-phosphohistidine intermediate) is an active-site residue.

The protein belongs to the NDK family. Homotetramer. It depends on Mg(2+) as a cofactor.

It localises to the cytoplasm. The catalysed reaction is a 2'-deoxyribonucleoside 5'-diphosphate + ATP = a 2'-deoxyribonucleoside 5'-triphosphate + ADP. The enzyme catalyses a ribonucleoside 5'-diphosphate + ATP = a ribonucleoside 5'-triphosphate + ADP. Its function is as follows. Major role in the synthesis of nucleoside triphosphates other than ATP. The ATP gamma phosphate is transferred to the NDP beta phosphate via a ping-pong mechanism, using a phosphorylated active-site intermediate. This Shewanella frigidimarina (strain NCIMB 400) protein is Nucleoside diphosphate kinase.